Reading from the N-terminus, the 916-residue chain is DNA topoisomerase 1 alpha (916 aa).

The tract at residues 1-369 (MGTETVSKPV…SSPSSGDGQK (369 aa)) is disordered. The segment covering 34-47 (SNSNQSKSNSQRSK) has biased composition (low complexity). Over residues 60 to 76 (PVTSPNGTTPSNKTSIV) the composition is skewed to polar residues. The span at 77–93 (KSSMPSSSSKASPAKSP) shows a compositional bias: low complexity. The segment covering 102–119 (VKDRSQLQKDQSECKIEH) has biased composition (basic and acidic residues). Residues 130 to 148 (SILSGNKGPTSSRQVSSPQ) show a composition bias toward polar residues. The segment covering 149–168 (PEKKNNGDRPLDRASRIIKD) has biased composition (basic and acidic residues). The residue at position 170 (serine 170) is a Phosphoserine. Positions 230–239 (KNSSADQSSL) are enriched in polar residues. The segment covering 253-267 (MKQDSVKKEIDDKGR) has biased composition (basic and acidic residues). A compositionally biased stretch (acidic residues) spans 285–294 (GTDDDDDDDV). Residue threonine 286 is modified to Phosphothreonine. Residues 354-366 (YSTSSKSSPSSGD) are compositionally biased toward low complexity. Interaction with DNA stretches follow at residues 577 to 578 (KY), 640 to 645 (RAGNEK), and 731 to 733 (TAK). Positions 584-914 (GSSLKGLSDK…MDVEPEYRFS (331 aa)) constitute a Topo IB-type catalytic domain. A coiled-coil region spans residues 778-860 (QRTVSKTHGA…ERDMHTKEDL (83 aa)). The O-(3'-phospho-DNA)-tyrosine intermediate role is filled by tyrosine 872.

The protein belongs to the type IB topoisomerase family. In terms of assembly, interacts with DEK3. As to expression, expressed in inflorescence meristems. Expressed in primordia of sepals, petals, stamens, carpels and ovules. Expressed in midstage embryos.

The protein resides in the nucleus. The catalysed reaction is ATP-independent breakage of single-stranded DNA, followed by passage and rejoining.. Functionally, releases the supercoiling and torsional tension of DNA introduced during the DNA replication and transcription by transiently cleaving and rejoining one strand of the DNA duplex. Introduces a single-strand break via transesterification at a target site in duplex DNA. The scissile phosphodiester is attacked by the catalytic tyrosine of the enzyme, resulting in the formation of a DNA-(3'-phosphotyrosyl)-enzyme intermediate and the expulsion of a 5'-OH DNA strand. The free DNA strand then rotates around the intact phosphodiester bond on the opposing strand, thus removing DNA supercoils. Finally, in the religation step, the DNA 5'-OH attacks the covalent intermediate to expel the active-site tyrosine and restore the DNA phosphodiester backbone. Can complement a TOP1-deficient yeast mutant. Plays a critical role in the maintenance of a regular pattern of organ initiation. Topoisomerases I enzymes (TOP1A and TOP1B) are essential for plant survival. Functions together with the stem cell maintenance gene WUSCHEL (WUS) in stem cell regulation. Required to maintain developmentally regulated gene repression. Functions synergistically with chromatin remodeling factors. Is required for the repression of WUS expression in flower development. Plays a role in polycomb group (PcG) protein-mediated histone H3 trimethylation on 'Lys-27' (H3K27me3) at the WUS gene locus. H3K27me3 induces transcriptional repression of WUS. May assist AGAMOUS (AG) in recruiting PcG proteins to WUS locus. Reduces nucleosome density, especially at genes that are targets of PcG proteins. Plays a role in epigenetic silencing. Involved in RNA-directed DNA methylation (RdDM) by promoting Pol V transcription to generate long non-coding RNA transcripts. Is dispensable for Pol IV-mediated small interfering RNA (siRNA) biogenesis. Promotes transposable element (TE) silencing at endogenous RdDM target loci through histone H3 dimethylation of 'Lys-9' (H3K9me2). Promotes the production of Pol V-dependent long non-coding transcripts that facilitate the recruitment of siRNA-AGO4 and AGO4 occupancy at TEs. This chain is DNA topoisomerase 1 alpha, found in Arabidopsis thaliana (Mouse-ear cress).